We begin with the raw amino-acid sequence, 534 residues long: Tyrosine-protein kinase Fyn (534 aa).

Residue glycine 2 is the site of N-myristoyl glycine attachment. 2 S-palmitoyl cysteine lipidation sites follow: cysteine 3 and cysteine 6. At threonine 12 the chain carries Phosphothreonine; by PKC. A disordered region spans residues threonine 15–tyrosine 39. The SH3 domain occupies threonine 82–serine 143. Residues tryptophan 149–alanine 246 enclose the SH2 domain. Positions leucine 268–phenylalanine 521 constitute a Protein kinase domain. Residues leucine 274–valine 282 and lysine 296 contribute to the ATP site. The active-site Proton acceptor is the aspartate 387. Phosphotyrosine; by autocatalysis is present on tyrosine 417. Tyrosine 528 bears the Phosphotyrosine mark.

This sequence belongs to the protein kinase superfamily. Tyr protein kinase family. SRC subfamily. As to quaternary structure, associates through its SH3 domain, to the p85 subunit of phosphatidylinositol 3-kinase. The cofactor is Mn(2+). In terms of tissue distribution, thymus and spleen.

The protein resides in the cytoplasm. The protein localises to the nucleus. Its subcellular location is the cell membrane. It localises to the perikaryon. The catalysed reaction is L-tyrosyl-[protein] + ATP = O-phospho-L-tyrosyl-[protein] + ADP + H(+). Inhibited by phosphorylation of Tyr-528 by leukocyte common antigen and activated by dephosphorylation of this site. Tyrosine-protein kinase implicated in the control of cell growth. Plays a role in the regulation of intracellular calcium levels. Required in brain development and mature brain function with important roles in the regulation of axon growth, axon guidance, and neurite extension. Role in CNTN1-mediated signaling. This Gallus gallus (Chicken) protein is Tyrosine-protein kinase Fyn (FYN).